The primary structure comprises 360 residues: Peptide chain release factor 1 (360 aa).

At glutamine 237 the chain carries N5-methylglutamine.

The protein belongs to the prokaryotic/mitochondrial release factor family. Post-translationally, methylated by PrmC. Methylation increases the termination efficiency of RF1.

It is found in the cytoplasm. In terms of biological role, peptide chain release factor 1 directs the termination of translation in response to the peptide chain termination codons UAG and UAA. The sequence is that of Peptide chain release factor 1 from Saccharophagus degradans (strain 2-40 / ATCC 43961 / DSM 17024).